The chain runs to 235 residues: 2-C-methyl-D-erythritol 4-phosphate cytidylyltransferase (235 aa).

Belongs to the IspD/TarI cytidylyltransferase family. IspD subfamily. Homodimer.

It carries out the reaction 2-C-methyl-D-erythritol 4-phosphate + CTP + H(+) = 4-CDP-2-C-methyl-D-erythritol + diphosphate. Its pathway is isoprenoid biosynthesis; isopentenyl diphosphate biosynthesis via DXP pathway; isopentenyl diphosphate from 1-deoxy-D-xylulose 5-phosphate: step 2/6. Its function is as follows. Catalyzes the formation of 4-diphosphocytidyl-2-C-methyl-D-erythritol from CTP and 2-C-methyl-D-erythritol 4-phosphate (MEP). The protein is 2-C-methyl-D-erythritol 4-phosphate cytidylyltransferase of Blochmanniella pennsylvanica (strain BPEN).